The primary structure comprises 371 residues: Histidinol-phosphate aminotransferase (371 aa).

Lysine 228 is subject to N6-(pyridoxal phosphate)lysine.

It belongs to the class-II pyridoxal-phosphate-dependent aminotransferase family. Histidinol-phosphate aminotransferase subfamily. Requires pyridoxal 5'-phosphate as cofactor.

It catalyses the reaction L-histidinol phosphate + 2-oxoglutarate = 3-(imidazol-4-yl)-2-oxopropyl phosphate + L-glutamate. It functions in the pathway amino-acid biosynthesis; L-histidine biosynthesis; L-histidine from 5-phospho-alpha-D-ribose 1-diphosphate: step 7/9. In Methanococcus maripaludis (strain C6 / ATCC BAA-1332), this protein is Histidinol-phosphate aminotransferase.